Consider the following 268-residue polypeptide: Microtubule-associated protein RP/EB family member 1 (268 aa).

Position 2 is an N-acetylalanine (A2). The Calponin-homology (CH) domain occupies 14 to 116 (NLSRHDMLAW…FVQWFKKFFD (103 aa)). Residue K66 is modified to N6-crotonyllysine. A Phosphotyrosine modification is found at Y124. The interaction with MTUS2/TIP150 stretch occupies residues 124-268 (YDPVAARQGQ…GGPQEEQEEY (145 aa)). Positions 146 to 191 (LSKPKKPLGSGSAAPQRPIATQRTTAAPKAGPGMVRKNPGMGNGDD) are disordered. Phosphoserine is present on S155. Residues 185 to 255 (GMGNGDDEAA…LYATDEGFVI (71 aa)) form the EB1 C-terminal domain. The interaction with APC stretch occupies residues 206-211 (TVEDLE). The DCTN1-binding stretch occupies residues 208 to 268 (EDLEKERDFY…GGPQEEQEEY (61 aa)). K220 is subject to N6-acetyllysine. Positions 220–242 (KLRNIELICQENEGENDPVLQRI) are APC-binding. Residues 232–255 (EGENDPVLQRIVDILYATDEGFVI) are interaction with SKA1.

The protein belongs to the MAPRE family. As to quaternary structure, homodimer. Heterodimer with MAPRE3. Interacts with DCTN1, DCTN2, TERF1 and dynein intermediate chain. Interaction with DIAPH1 and DIAPH2. Interacts (via C-terminal residues 206-211) with APC (via C-terminal residues 2674-2845); the interaction inhibits association with and bundling of F-actin. Interacts with CLASP2, DST, KIF2C and STIM1; probably required for their targeting to the growing microtubule plus ends. Interacts with MTUS2; interaction is direct and probably targets MTUS2 to microtubules. Interacts (via C-terminus) with SKA1 (via SXIP motif); the interaction is direct and stabilizes the kinetochore-microtubule attachment of the SKA1 complex. Interacts with APC2. Interacts with CLASP1. Interacts with CDK5RAP2. According to another report, MAPRE1 does not interact with CDK5RAP2. Interacts with MACF1. Interacts with RABL2/RABL2A; binds preferentially to GTP-bound RABL2. Interacts with KCNAB2. Interacts (via C-terminus) with CLIP1. Interacts with SLAIN2 and SLAIN1. Interacts with KIF18B; this interaction is required for efficient accumulation of KIF18B at microtubule plus ends. Interacts with MISP. Interacts with KNSTRN. Interacts with NCKAP5L. Interacts with AKAP9. Interacts with PDE4DIP; this interaction, which is PDE4DIP isoform-specific, is required for its recruitment to the Golgi apparatus. Interacts with CAMSAP2. May form a pericentrosomal complex with AKAP9, CDK5RAP2 and PDE4DIP isoform 2/MMG8/SMYLE; within this complex, MAPRE1 binding to CDK5RAP2 may be mediated by PDE4DIP. Contrary to other mammalian species, does not interact with CDK5RAP2, possibly due to the lack of conservation of the MAPRE1-binding motif in rat CDK5RAP2. Interacts with AKNA. Interacts with GAS2L1, GAS2L2, and GAS2L3. Interacts with RARRES1 and AGBL2. Post-translationally, acetylation at Lys-220 by KAT2B/PCAF promotes dynamic kinetochore-microtubule interactions in early mitosis. In terms of processing, crotonylated by KAT5 during mitosis, promoting astral microtubule plasticity and dynamic connection between astral microtubules and the cortex during mitotic chromosome segregation, thereby ensuring accurate spindle positioning in mitosis. Decrotonylated by HDAC3.

Its subcellular location is the cytoplasm. It is found in the cytoskeleton. It localises to the microtubule organizing center. The protein resides in the centrosome. The protein localises to the golgi apparatus. Its subcellular location is the spindle. It is found in the spindle pole. Plus-end tracking protein (+TIP) that binds to the plus-end of microtubules and regulates the dynamics of the microtubule cytoskeleton. Recruits other +TIP proteins to microtubules by binding to a conserved Ser-X-Leu-Pro (SXLP) motif in their polypeptide chains. Promotes cytoplasmic microtubule nucleation and elongation. Involved in mitotic spindle positioning by stabilizing microtubules and promoting dynamic connection between astral microtubules and the cortex during mitotic chromosome segregation. Assists chromosome alignment in metaphase by recruiting the SKA complex to the spindle and stabilizing its interactions with microtubule bundles (K-fibers). Also acts as a regulator of minus-end microtubule organization: interacts with the complex formed by AKAP9 and PDE4DIP, leading to recruit CAMSAP2 to the Golgi apparatus, thereby tethering non-centrosomal minus-end microtubules to the Golgi, an important step for polarized cell movement. Promotes elongation of CAMSAP2-decorated microtubule stretches on the minus-end of microtubules. Acts as a regulator of autophagosome transport via interaction with CAMSAP2. Functions downstream of Rho GTPases and DIAPH1 in stable microtubule formation. May play a role in cell migration. The sequence is that of Microtubule-associated protein RP/EB family member 1 (Mapre1) from Rattus norvegicus (Rat).